The following is a 203-amino-acid chain: Interferon type B (203 aa).

The signal sequence occupies residues 1 to 27 (MTANHQSPGMHSILLLLLLPALTTTFS). 2 disulfide bridges follow: C28/C125 and C57/C164. N37 and N160 each carry an N-linked (GlcNAc...) asparagine glycan.

It belongs to the alpha/beta interferon family.

It is found in the secreted. Functionally, has antiviral activities. The sequence is that of Interferon type B (IFNB) from Gallus gallus (Chicken).